The following is a 337-amino-acid chain: DNA-directed RNA polymerase subunit alpha (337 aa).

An alpha N-terminal domain (alpha-NTD) region spans residues 1 to 233 (MVREEVTIST…NLFIPFLHAE (233 aa)). The interval 266 to 337 (GIALKCIFID…FAMNLPKDFF (72 aa)) is alpha C-terminal domain (alpha-CTD).

It belongs to the RNA polymerase alpha chain family. As to quaternary structure, in plastids the minimal PEP RNA polymerase catalytic core is composed of four subunits: alpha, beta, beta', and beta''. When a (nuclear-encoded) sigma factor is associated with the core the holoenzyme is formed, which can initiate transcription.

It localises to the plastid. Its subcellular location is the chloroplast. It catalyses the reaction RNA(n) + a ribonucleoside 5'-triphosphate = RNA(n+1) + diphosphate. Functionally, DNA-dependent RNA polymerase catalyzes the transcription of DNA into RNA using the four ribonucleoside triphosphates as substrates. The chain is DNA-directed RNA polymerase subunit alpha from Ceratophyllum demersum (Rigid hornwort).